The following is a 753-amino-acid chain: Probable dipeptidyl peptidase 4 (753 aa).

A signal peptide spans 1–18; the sequence is MKTSQFLSLLLLAGIAQA. N-linked (GlcNAc...) asparagine glycans are attached at residues N84, N114, and N222. Catalysis depends on charge relay system residues S616, D668, and H703.

This sequence belongs to the peptidase S9B family.

It localises to the secreted. It catalyses the reaction Release of an N-terminal dipeptide, Xaa-Yaa-|-Zaa-, from a polypeptide, preferentially when Yaa is Pro, provided Zaa is neither Pro nor hydroxyproline.. Its function is as follows. Extracellular dipeptidyl-peptidase which removes N-terminal dipeptides sequentially from polypeptides having unsubstituted N-termini provided that the penultimate residue is proline. Contributes to pathogenicity. This Trichophyton verrucosum (strain HKI 0517) protein is Probable dipeptidyl peptidase 4 (DPP4).